Consider the following 79-residue polypeptide: MSSIEERVKKIVVEQLGVKEEEVSGEASFVDDLGADSLDTVELVMALEEEFECEIPDEEAEKITTVQQAVDYINKHLGS.

One can recognise a Carrier domain in the interval 2–77; the sequence is SSIEERVKKI…QAVDYINKHL (76 aa). S37 bears the O-(pantetheine 4'-phosphoryl)serine mark.

The protein belongs to the acyl carrier protein (ACP) family. 4'-phosphopantetheine is transferred from CoA to a specific serine of apo-ACP by AcpS. This modification is essential for activity because fatty acids are bound in thioester linkage to the sulfhydryl of the prosthetic group.

It is found in the cytoplasm. It functions in the pathway lipid metabolism; fatty acid biosynthesis. Functionally, carrier of the growing fatty acid chain in fatty acid biosynthesis. This Alkalilimnicola ehrlichii (strain ATCC BAA-1101 / DSM 17681 / MLHE-1) protein is Acyl carrier protein.